A 257-amino-acid polypeptide reads, in one-letter code: NAD-capped RNA hydrolase NudC (257 aa).

Lysine 25 and arginine 69 together coordinate substrate. Cysteine 98 and cysteine 101 together coordinate Zn(2+). Glutamate 111 lines the substrate pocket. Cysteine 116 and cysteine 119 together coordinate Zn(2+). A substrate-binding site is contributed by tyrosine 124. The region spanning 125–248 is the Nudix hydrolase domain; sequence PQIAPCIIVA…TVARRLIEDT (124 aa). Residues alanine 158, glutamate 174, and glutamate 178 each coordinate a divalent metal cation. Positions 159 to 180 match the Nudix box motif; it reads GFVEVGETLEQAVAREVMEESG. 192 to 199 contacts substrate; the sequence is QPWPFPQS. Glutamate 219 is an a divalent metal cation binding site. Residue alanine 241 coordinates substrate.

The protein belongs to the Nudix hydrolase family. NudC subfamily. In terms of assembly, homodimer. It depends on Mg(2+) as a cofactor. Mn(2+) serves as cofactor. Requires Zn(2+) as cofactor.

The enzyme catalyses a 5'-end NAD(+)-phospho-ribonucleoside in mRNA + H2O = a 5'-end phospho-adenosine-phospho-ribonucleoside in mRNA + beta-nicotinamide D-ribonucleotide + 2 H(+). The catalysed reaction is NAD(+) + H2O = beta-nicotinamide D-ribonucleotide + AMP + 2 H(+). It catalyses the reaction NADH + H2O = reduced beta-nicotinamide D-ribonucleotide + AMP + 2 H(+). Its function is as follows. mRNA decapping enzyme that specifically removes the nicotinamide adenine dinucleotide (NAD) cap from a subset of mRNAs by hydrolyzing the diphosphate linkage to produce nicotinamide mononucleotide (NMN) and 5' monophosphate mRNA. The NAD-cap is present at the 5'-end of some mRNAs and stabilizes RNA against 5'-processing. Has preference for mRNAs with a 5'-end purine. Catalyzes the hydrolysis of a broad range of dinucleotide pyrophosphates. The sequence is that of NAD-capped RNA hydrolase NudC from Shigella flexneri serotype 5b (strain 8401).